The chain runs to 254 residues: Undecaprenyl-diphosphatase (254 aa).

8 consecutive transmembrane segments (helical) span residues 1–21 (MGIIESIILGIVEGLTEFLPV), 41–61 (AHKAFEVAIQSGAILAVVFLY), 75–95 (LIIAFIPTGILGFLLYKIIKG), 96–116 (LFSPYIVSIMLIVGGLVFIAV), 130–150 (ILKIPYYKAFFIGVFQSIAMI), 174–194 (AEFSFLLAVPTMFAATSYDIM), 210–230 (TGFVTAFVFAVLAIKLFIGFV), and 234–254 (NFVPFGIYRIILGFIFLLFVL).

It belongs to the UppP family.

It localises to the cell inner membrane. It carries out the reaction di-trans,octa-cis-undecaprenyl diphosphate + H2O = di-trans,octa-cis-undecaprenyl phosphate + phosphate + H(+). Functionally, catalyzes the dephosphorylation of undecaprenyl diphosphate (UPP). Confers resistance to bacitracin. The chain is Undecaprenyl-diphosphatase from Persephonella marina (strain DSM 14350 / EX-H1).